The primary structure comprises 1005 residues: Band 4.1-like protein 2 (1005 aa).

Residues 1–80 (MTTEVGSVSE…SRGISRFIPP (80 aa)) form a disordered region. Position 2 is an N-acetylthreonine (threonine 2). At serine 7 the chain carries Phosphoserine. A compositionally biased stretch (basic and acidic residues) spans 22–31 (ATKEKPKEVA). A phosphoserine mark is found at serine 39, serine 58, and serine 87. Threonine 89 bears the Phosphothreonine mark. Residues 93–196 (AKDGGDKKEP…GGAAKRETKE (104 aa)) are disordered. Basic and acidic residues-rich tracts occupy residues 111–157 (VLDK…EKPS) and 169–196 (VSKEREEKVKETQEDKLEGGAAKRETKE). Glycyl lysine isopeptide (Lys-Gly) (interchain with G-Cter in SUMO2) cross-links involve residues lysine 140 and lysine 144. Phosphoserine is present on residues serine 170, serine 208, serine 386, serine 402, serine 499, serine 550, serine 562, serine 575, serine 598, and serine 614. The FERM domain maps to 218–499 (VQCKVTLLDG…EHHTFYRLVS (282 aa)). A hydrophilic region spans residues 502-610 (QPPKAKFLTL…KAPHLQLIEG (109 aa)). Residues 611-676 (KKNSLRVEGD…WEKRRITPLS (66 aa)) form a spectrin--actin-binding region. Tyrosine 623 bears the Phosphotyrosine mark. Phosphoserine is present on residues serine 627 and serine 647. A disordered region spans residues 652 to 800 (KRNFMESTPE…EEAVPEASPV (149 aa)). A compositionally biased stretch (polar residues) spans 675 to 686 (LSLQTQGSSHET). Basic and acidic residues predominate over residues 690–711 (VEEKKRAEVGKDERVITEEMNG). 2 positions are modified to phosphoserine: serine 715 and serine 718. The segment covering 734-746 (STSLSSESSSSSS) has biased composition (low complexity). Basic and acidic residues-rich tracts occupy residues 754 to 770 (GEYRPHHRVTEGTIREE) and 780 to 793 (EPRPAAKVVEREEA). Phosphothreonine is present on threonine 763. Serine 828 is modified (phosphoserine). Positions 855 to 1005 (HVDIDVLPQI…ETELAEEGED (151 aa)) are C-terminal (CTD).

As to quaternary structure, interacts with FCGR1A. Interacts with TRPC4. Interacts (via CTD domain) with FKBP2. Interacts with NUMA1; this interaction is negatively regulated by CDK1 during metaphase and promotes anaphase-specific localization of NUMA1 in symmetrically dividing cells. In terms of tissue distribution, widely expressed.

It localises to the cytoplasm. The protein localises to the cytoskeleton. The protein resides in the cell cortex. Its subcellular location is the cell membrane. In terms of biological role, required for dynein-dynactin complex and NUMA1 recruitment at the mitotic cell cortex during anaphase. This is Band 4.1-like protein 2 from Homo sapiens (Human).